A 113-amino-acid polypeptide reads, in one-letter code: MIPGGGQPNMQQLLQQAQKMQQDLANAQEELARTEVEGQAGGGLVKATVTGSGELRALVIDPKAVDPEDTETLADLVVAAVQAANENAQALQQQKLGPLAQGLGGGGIPGLPF.

It belongs to the YbaB/EbfC family. As to quaternary structure, homodimer.

It localises to the cytoplasm. Its subcellular location is the nucleoid. In terms of biological role, binds to DNA and alters its conformation. May be involved in regulation of gene expression, nucleoid organization and DNA protection. This Streptomyces avermitilis (strain ATCC 31267 / DSM 46492 / JCM 5070 / NBRC 14893 / NCIMB 12804 / NRRL 8165 / MA-4680) protein is Nucleoid-associated protein SAV_4556.